We begin with the raw amino-acid sequence, 147 residues long: Nucleoside diphosphate kinase (147 aa).

6 residues coordinate ATP: lysine 9, phenylalanine 57, arginine 85, threonine 91, arginine 102, and asparagine 112. Histidine 115 (pros-phosphohistidine intermediate) is an active-site residue.

It belongs to the NDK family. The cofactor is Mg(2+).

The protein localises to the cytoplasm. The catalysed reaction is a 2'-deoxyribonucleoside 5'-diphosphate + ATP = a 2'-deoxyribonucleoside 5'-triphosphate + ADP. The enzyme catalyses a ribonucleoside 5'-diphosphate + ATP = a ribonucleoside 5'-triphosphate + ADP. In terms of biological role, major role in the synthesis of nucleoside triphosphates other than ATP. The ATP gamma phosphate is transferred to the NDP beta phosphate via a ping-pong mechanism, using a phosphorylated active-site intermediate. This is Nucleoside diphosphate kinase from Ignicoccus hospitalis (strain KIN4/I / DSM 18386 / JCM 14125).